The primary structure comprises 319 residues: Beta-ketoacyl-[acyl-carrier-protein] synthase III (319 aa).

Residues Cys115 and His246 contribute to the active site. The segment at 247-251 is ACP-binding; it reads QANLR. Residue Asn276 is part of the active site.

It belongs to the thiolase-like superfamily. FabH family. Homodimer.

It is found in the cytoplasm. The catalysed reaction is malonyl-[ACP] + acetyl-CoA + H(+) = 3-oxobutanoyl-[ACP] + CO2 + CoA. Its pathway is lipid metabolism; fatty acid biosynthesis. Its function is as follows. Catalyzes the condensation reaction of fatty acid synthesis by the addition to an acyl acceptor of two carbons from malonyl-ACP. Catalyzes the first condensation reaction which initiates fatty acid synthesis and may therefore play a role in governing the total rate of fatty acid production. Possesses both acetoacetyl-ACP synthase and acetyl transacylase activities. Its substrate specificity determines the biosynthesis of branched-chain and/or straight-chain of fatty acids. This chain is Beta-ketoacyl-[acyl-carrier-protein] synthase III, found in Coxiella burnetii (strain Dugway 5J108-111).